The primary structure comprises 147 residues: Small ribosomal subunit protein uS12 (147 aa).

The protein belongs to the universal ribosomal protein uS12 family. Part of the 30S ribosomal subunit.

In terms of biological role, with S4 and S5 plays an important role in translational accuracy. Located at the interface of the 30S and 50S subunits. The chain is Small ribosomal subunit protein uS12 from Pyrococcus horikoshii (strain ATCC 700860 / DSM 12428 / JCM 9974 / NBRC 100139 / OT-3).